We begin with the raw amino-acid sequence, 420 residues long: D-tagatose-1,6-bisphosphate aldolase subunit GatZ (420 aa).

It belongs to the GatZ/KbaZ family. GatZ subfamily. As to quaternary structure, forms a complex with GatY.

It functions in the pathway carbohydrate metabolism; D-tagatose 6-phosphate degradation; D-glyceraldehyde 3-phosphate and glycerone phosphate from D-tagatose 6-phosphate: step 2/2. Functionally, component of the tagatose-1,6-bisphosphate aldolase GatYZ that is required for full activity and stability of the Y subunit. Could have a chaperone-like function for the proper and stable folding of GatY. When expressed alone, GatZ does not show any aldolase activity. Is involved in the catabolism of galactitol. The sequence is that of D-tagatose-1,6-bisphosphate aldolase subunit GatZ from Shigella boydii serotype 18 (strain CDC 3083-94 / BS512).